Consider the following 165-residue polypeptide: 3-isopropylmalate dehydratase small subunit (165 aa).

This sequence belongs to the LeuD family. LeuD type 2 subfamily. As to quaternary structure, heterodimer of LeuC and LeuD.

It catalyses the reaction (2R,3S)-3-isopropylmalate = (2S)-2-isopropylmalate. It functions in the pathway amino-acid biosynthesis; L-leucine biosynthesis; L-leucine from 3-methyl-2-oxobutanoate: step 2/4. In terms of biological role, catalyzes the isomerization between 2-isopropylmalate and 3-isopropylmalate, via the formation of 2-isopropylmaleate. The protein is 3-isopropylmalate dehydratase small subunit of Saccharolobus islandicus (strain Y.N.15.51 / Yellowstone #2) (Sulfolobus islandicus).